Here is a 307-residue protein sequence, read N- to C-terminus: Chaperone protein DnaJ 2 (307 aa).

The J domain maps to 6–71; that stretch reads NYYQILGVPR…TKRRELDSRL (66 aa). The interval 69–133 is disordered; sequence SRLFGRFRRP…TRRTKVVSPA (65 aa). A compositionally biased stretch (polar residues) spans 88–99; the sequence is NGGRSPNGTSVN. A compositionally biased stretch (low complexity) spans 100–114; the sequence is GQVRTPTGRTGTRQP.

It belongs to the DnaJ family. Homodimer. It depends on Zn(2+) as a cofactor.

Its subcellular location is the cytoplasm. In terms of biological role, participates actively in the response to hyperosmotic and heat shock by preventing the aggregation of stress-denatured proteins and by disaggregating proteins, also in an autonomous, DnaK-independent fashion. Unfolded proteins bind initially to DnaJ; upon interaction with the DnaJ-bound protein, DnaK hydrolyzes its bound ATP, resulting in the formation of a stable complex. GrpE releases ADP from DnaK; ATP binding to DnaK triggers the release of the substrate protein, thus completing the reaction cycle. Several rounds of ATP-dependent interactions between DnaJ, DnaK and GrpE are required for fully efficient folding. Also involved, together with DnaK and GrpE, in the DNA replication of plasmids through activation of initiation proteins. The polypeptide is Chaperone protein DnaJ 2 (dnaJ2) (Synechocystis sp. (strain ATCC 27184 / PCC 6803 / Kazusa)).